A 211-amino-acid chain; its full sequence is MSAKRVEPKKTSLSKNYRAVCLELKPEPIKTYDYKGAKQEGPFTKPGGTKELKNELREVREEMKEKMEEIKQIKDVMDKDFDKLQEFVEIMKEMQKDMDEKMDVLINIQKNSKFPLRRGLKMQQELRLIGKTDTEPQLRLRKMDGAGGAPLSLHKKMVERQQPKDPMDPLHQCDSCFEKCLLCTPQNNYDRGKLPYHAWASFSPLASGPAF.

A coiled-coil region spans residues 47-111; sequence GGTKELKNEL…MDVLINIQKN (65 aa).

The protein is Testis-expressed protein 35 (Tex35) of Bos taurus (Bovine).